Consider the following 239-residue polypeptide: Uridylate kinase (239 aa).

13–16 (KVSG) is an ATP binding site. Residue G55 coordinates UMP. Positions 56 and 60 each coordinate ATP. UMP contacts are provided by residues D75 and 136–143 (TGNPFFTT). Positions 163, 164, 169, and 172 each coordinate ATP.

Belongs to the UMP kinase family. In terms of assembly, homohexamer.

The protein resides in the cytoplasm. It carries out the reaction UMP + ATP = UDP + ADP. The protein operates within pyrimidine metabolism; CTP biosynthesis via de novo pathway; UDP from UMP (UMPK route): step 1/1. Inhibited by UTP. Functionally, catalyzes the reversible phosphorylation of UMP to UDP. The sequence is that of Uridylate kinase from Bartonella bacilliformis (strain ATCC 35685 / KC583 / Herrer 020/F12,63).